A 510-amino-acid chain; its full sequence is ATP synthase subunit alpha (510 aa).

Residue 170 to 177 (GDRQTGKT) participates in ATP binding.

It belongs to the ATPase alpha/beta chains family. As to quaternary structure, F-type ATPases have 2 components, CF(1) - the catalytic core - and CF(0) - the membrane proton channel. CF(1) has five subunits: alpha(3), beta(3), gamma(1), delta(1), epsilon(1). CF(0) has three main subunits: a(1), b(2) and c(9-12). The alpha and beta chains form an alternating ring which encloses part of the gamma chain. CF(1) is attached to CF(0) by a central stalk formed by the gamma and epsilon chains, while a peripheral stalk is formed by the delta and b chains.

It localises to the cell inner membrane. The enzyme catalyses ATP + H2O + 4 H(+)(in) = ADP + phosphate + 5 H(+)(out). In terms of biological role, produces ATP from ADP in the presence of a proton gradient across the membrane. The alpha chain is a regulatory subunit. This chain is ATP synthase subunit alpha, found in Maricaulis maris (strain MCS10) (Caulobacter maris).